The sequence spans 260 residues: Homeobox protein Hox-D11b (260 aa).

Residues 1–14 (MFSSSFSYPSKTSP) show a composition bias toward low complexity. Disordered stretches follow at residues 1 to 21 (MFSSSFSYPSKTSPLTSPFLA) and 151 to 206 (ITPG…CTRR). The segment covering 167–179 (RSPDGESSEERAG) has biased composition (basic and acidic residues). A DNA-binding region (homeobox; truncated) is located at residues 205 to 260 (RRKKRCPYSKQQIIELEREFLFNIYINKDRRMQLSHLLRLTDRCVNNPLNQDSFFT).

It belongs to the Abd-B homeobox family.

The protein resides in the nucleus. Sequence-specific transcription factor which is part of a developmental regulatory system that provides cells with specific positional identities on the anterior-posterior axis. In Takifugu rubripes (Japanese pufferfish), this protein is Homeobox protein Hox-D11b (hoxd11b).